A 316-amino-acid chain; its full sequence is MPVSKSVSPPKRTLLLAPPTLASHSSALSSVLADYDRSVTDLQMLDRLSAGLVKLPSSTYDRVLILADASFMLGESLALMNRAVLGPVAEALKPNGRLQSQDGNSLEESTLSKEAVLAGLVASRGGFEKPDYGDNEGAVTLKFGLKKKNQPAPLADGSVPLNFKKKKPVEVKPVVPVVPAGVGFIDLSDDLDDDDLIDEDTLMTEEDLLRPINIPVECQPKAGKRRRACKDCSCGLAERLVKEDAEKRAEADKKLESVKLATDDLAEIDFTVQGKVGSCGNCSLGDAFRCDGCPYIGLPPFKPGEEVRLLNNDVQL.

An N-terminal SAM-like domain region spans residues 7–139 (VSPPKRTLLL…PDYGDNEGAV (133 aa)). Residues 140 to 208 (TLKFGLKKKN…EDTLMTEEDL (69 aa)) form a linker region. 4 residues coordinate [2Fe-2S] cluster: Cys218, Cys229, Cys232, and Cys234. Residues 218-234 (CQPKAGKRRRACKDCSC) are fe-S binding site A. [4Fe-4S] cluster is bound by residues Cys279, Cys282, Cys290, and Cys293. Short sequence motifs (cx2C motif) lie at residues 279–282 (CGNC) and 290–293 (CDGC). Residues 279–293 (CGNCSLGDAFRCDGC) form a fe-S binding site B region.

The protein belongs to the anamorsin family. In terms of assembly, monomer. Interacts with TAH18. Interacts with MIA40. [2Fe-2S] cluster is required as a cofactor. Requires [4Fe-4S] cluster as cofactor.

The protein localises to the cytoplasm. The protein resides in the mitochondrion intermembrane space. Its function is as follows. Component of the cytosolic iron-sulfur (Fe-S) protein assembly (CIA) machinery required for the maturation of extramitochondrial Fe-S proteins. Part of an electron transfer chain functioning in an early step of cytosolic Fe-S biogenesis, facilitating the de novo assembly of a [4Fe-4S] cluster on the scaffold complex CFD1-NBP35. Electrons are transferred to DRE2 from NADPH via the FAD- and FMN-containing protein TAH18. TAH18-DRE2 are also required for the assembly of the diferric tyrosyl radical cofactor of ribonucleotide reductase (RNR), probably by providing electrons for reduction during radical cofactor maturation in the catalytic small subunit RNR2. The protein is Fe-S cluster assembly protein DRE2 of Fusarium vanettenii (strain ATCC MYA-4622 / CBS 123669 / FGSC 9596 / NRRL 45880 / 77-13-4) (Fusarium solani subsp. pisi).